Here is a 149-residue protein sequence, read N- to C-terminus: Histidine-containing phosphotransfer protein 2 (149 aa).

An HPt domain is found at 39-144 (TPGFVSEVVT…LQLEQQIQAY (106 aa)). His-80 carries the post-translational modification Phosphohistidine.

Two-component system major event consists of a His-to-Asp phosphorelay between a sensor histidine kinase (HK) and a response regulator (RR). In plants, the His-to-Asp phosphorelay involves an additional intermediate named Histidine-containing phosphotransfer protein (HPt). This multistep phosphorelay consists of a His-Asp-His-Asp sequential transfer of a phosphate group between first a His and an Asp of the HK protein, followed by the transfer to a conserved His of the HPt protein and finally the transfer to an Asp in the receiver domain of the RR protein. Widely expressed.

It localises to the cytoplasm. It is found in the cytosol. The protein resides in the nucleus. Functionally, functions as a two-component phosphorelay mediators between cytokinin sensor histidine kinases and response regulators (B-type ARRs). Plays an important role in propagating cytokinin signal transduction through the multistep His-to-Asp phosphorelay. Functions as a positive regulator of the cytokinin signaling pathway. May play a regulatory role in salt and drought tolerance during plant development. The sequence is that of Histidine-containing phosphotransfer protein 2 from Oryza sativa subsp. japonica (Rice).